Here is a 330-residue protein sequence, read N- to C-terminus: Fructose-1,6-bisphosphatase class 1 (330 aa).

The Mg(2+) site is built by E84, D103, L105, and D106. Substrate contacts are provided by residues 106–109, N196, and K262; that span reads DGSS. E268 lines the Mg(2+) pocket.

The protein belongs to the FBPase class 1 family. As to quaternary structure, homotetramer. Requires Mg(2+) as cofactor.

The protein resides in the cytoplasm. The catalysed reaction is beta-D-fructose 1,6-bisphosphate + H2O = beta-D-fructose 6-phosphate + phosphate. Its pathway is carbohydrate biosynthesis; gluconeogenesis. The protein is Fructose-1,6-bisphosphatase class 1 of Shewanella sp. (strain ANA-3).